Reading from the N-terminus, the 402-residue chain is Acetyl-CoA acetyltransferase (402 aa).

The active-site Acyl-thioester intermediate is the Cys90. CoA is bound by residues Tyr185 and Lys230. Residue Tyr185 coordinates K(+). A K(+)-binding site is contributed by Ala250. Residue Ser251 participates in CoA binding. A K(+)-binding site is contributed by Val348. Active-site proton acceptor residues include His352 and Cys382.

Belongs to the thiolase-like superfamily. Thiolase family. As to quaternary structure, homotetramer.

Its subcellular location is the cytoplasm. The protein resides in the cytosol. It carries out the reaction 2 acetyl-CoA = acetoacetyl-CoA + CoA. Its pathway is metabolic intermediate biosynthesis; (R)-mevalonate biosynthesis; (R)-mevalonate from acetyl-CoA: step 1/3. Its function is as follows. Acetyl-CoA acetyltransferase; part of the first module of ergosterol biosynthesis pathway that includes the early steps of the pathway, conserved across all eukaryotes, and which results in the formation of mevalonate from acetyl-coenzyme A (acetyl-CoA). ERG10 catalyzes the formation of acetoacetyl-CoA from acetyl-CoA. The first module starts with the action of the cytosolic acetyl-CoA acetyltransferase ERG10 that catalyzes the formation of acetoacetyl-CoA. The hydroxymethylglutaryl-CoA synthase ERG13 then condenses acetyl-CoA with acetoacetyl-CoA to form HMG-CoA. The 3-hydroxy-3-methylglutaryl-coenzyme A (HMG-CoA) reductase HMG1 finally reduces HMG-CoA to produce mevalonate. The chain is Acetyl-CoA acetyltransferase from Candida albicans (strain SC5314 / ATCC MYA-2876) (Yeast).